The following is a 297-amino-acid chain: Nucleotide-binding protein BURPS668_0577 (297 aa).

Residue 8-15 (GISGSGKS) participates in ATP binding. Residue 57–60 (DARS) coordinates GTP.

The protein belongs to the RapZ-like family.

Functionally, displays ATPase and GTPase activities. This chain is Nucleotide-binding protein BURPS668_0577, found in Burkholderia pseudomallei (strain 668).